The sequence spans 262 residues: Dihydroorotate dehydrogenase B (NAD(+)), electron transfer subunit (262 aa).

Residues lysine 3–valine 104 form the FAD-binding FR-type domain. FAD contacts are provided by residues arginine 53–serine 56, leucine 70–arginine 72, and glycine 79–threonine 80. Residues cysteine 226, cysteine 231, cysteine 234, and cysteine 249 each coordinate [2Fe-2S] cluster.

This sequence belongs to the PyrK family. Heterotetramer of 2 PyrK and 2 PyrD type B subunits. The cofactor is [2Fe-2S] cluster. Requires FAD as cofactor.

Its pathway is pyrimidine metabolism; UMP biosynthesis via de novo pathway; orotate from (S)-dihydroorotate (NAD(+) route): step 1/1. Its function is as follows. Responsible for channeling the electrons from the oxidation of dihydroorotate from the FMN redox center in the PyrD type B subunit to the ultimate electron acceptor NAD(+). The protein is Dihydroorotate dehydrogenase B (NAD(+)), electron transfer subunit of Lactococcus lactis subsp. lactis (strain IL1403) (Streptococcus lactis).